Reading from the N-terminus, the 223-residue chain is Probable cytokinin riboside 5'-monophosphate phosphoribohydrolase LOGL1 (223 aa).

Substrate-binding positions include Glu-89, 107–108 (RK), 124–130 (GYGTMEE), and Thr-136. A disordered region spans residues 201-223 (QEVAPRTSWEMSELGYGKTPEES).

Belongs to the LOG family. Expressed in shoot apex, immature inflorescences and flowers.

The enzyme catalyses N(6)-(dimethylallyl)adenosine 5'-phosphate + H2O = N(6)-dimethylallyladenine + D-ribose 5-phosphate. The catalysed reaction is 9-ribosyl-trans-zeatin 5'-phosphate + H2O = trans-zeatin + D-ribose 5-phosphate. Cytokinin-activating enzyme working in the direct activation pathway. Phosphoribohydrolase that converts inactive cytokinin nucleotides to the biologically active free-base forms. In Oryza sativa subsp. japonica (Rice), this protein is Probable cytokinin riboside 5'-monophosphate phosphoribohydrolase LOGL1 (LOGL1).